Reading from the N-terminus, the 292-residue chain is 33 kDa chaperonin (292 aa).

2 cysteine pairs are disulfide-bonded: cysteine 230/cysteine 232 and cysteine 263/cysteine 266.

It belongs to the HSP33 family. Under oxidizing conditions two disulfide bonds are formed involving the reactive cysteines. Under reducing conditions zinc is bound to the reactive cysteines and the protein is inactive.

The protein localises to the cytoplasm. Redox regulated molecular chaperone. Protects both thermally unfolding and oxidatively damaged proteins from irreversible aggregation. Plays an important role in the bacterial defense system toward oxidative stress. The polypeptide is 33 kDa chaperonin (Escherichia coli O7:K1 (strain IAI39 / ExPEC)).